The sequence spans 256 residues: Ubiquinone biosynthesis O-methyltransferase (256 aa).

Arginine 44, glycine 80, aspartate 101, and methionine 144 together coordinate S-adenosyl-L-methionine.

The protein belongs to the methyltransferase superfamily. UbiG/COQ3 family.

The enzyme catalyses a 3-demethylubiquinol + S-adenosyl-L-methionine = a ubiquinol + S-adenosyl-L-homocysteine + H(+). The catalysed reaction is a 3-(all-trans-polyprenyl)benzene-1,2-diol + S-adenosyl-L-methionine = a 2-methoxy-6-(all-trans-polyprenyl)phenol + S-adenosyl-L-homocysteine + H(+). Its pathway is cofactor biosynthesis; ubiquinone biosynthesis. Functionally, O-methyltransferase that catalyzes the 2 O-methylation steps in the ubiquinone biosynthetic pathway. The chain is Ubiquinone biosynthesis O-methyltransferase from Methylocella silvestris (strain DSM 15510 / CIP 108128 / LMG 27833 / NCIMB 13906 / BL2).